We begin with the raw amino-acid sequence, 356 residues long: Na(+)/H(+) exchange regulatory cofactor NHE-RF1 (356 aa).

Serine 2 is subject to N-acetylserine. Residues serine 2 and serine 46 each carry the phosphoserine modification. The 81-residue stretch at 14–94 (LCCLEKGPNG…AVRLLVVDPE (81 aa)) folds into the PDZ 1 domain. A disordered region spans residues 113–142 (AQEKSEHTEPPAAADTKKAGDQNEAEKSHL). Residues 151–231 (LCTMKKGPNG…EAKLLVVDKE (81 aa)) form the PDZ 2 domain. The tract at residues 265–356 (NSREALVEPA…SKKNELFSNL (92 aa)) is disordered. A phosphoserine mark is found at serine 266, serine 277, serine 287, and serine 288. Residues 272–288 (EPASESPRPALARSASS) show a composition bias toward low complexity. The residue at position 290 (threonine 290) is a Phosphothreonine. Residues serine 291 and serine 299 each carry the phosphoserine modification. Over residues 307-317 (EPSSTSSSSDP) the composition is skewed to low complexity. A compositionally biased stretch (basic and acidic residues) spans 346 to 356 (WSKKNELFSNL).

As to quaternary structure, homodimer, and heterodimer with NHERF2. Binds the N-termini of EZR, RDX and MSN. Binds the C-termini of PDGFRA, PDGFRB, ADRB2, NOS2 and CFTR. Binds ARHGAP17, EPI64, RACK1, OPRK1, GNAQ, CTNNB1 and PLCB3. Binds PDZK1. Interacts with CLCN3. Binds the C-terminus of PAG1. In resting T-cells, part of a PAG1-NHERF1-MSN complex which is disrupted upon TCR activation. Forms a complex with CFTR and SLC4A7. Forms a complex with SLC4A7 and ATP6V1B1. Interacts with TRPC4 (via the PDZ-binding domain). Directly interacts with HTR4. Interacts (via the PDZ 1 domain) with PODXL (via the C-terminal PDZ-binding motif DTHL); interaction is not detected in glomerular epithelium cells. Interacts (via the PDZ 1 domain) with PODXL (via the C-terminal PDZ-binding motif DTHL); the interaction take place early in the secretory pathway and is necessary for its apical membrane sorting. Interacts with SLC26A3. Interacts with MCC. Interacts with SLC34A1. Interacts (via the PDZ domains) with SLC26A6 isoform 4 and isoform 5. Interacts (via PDZ domains) with ACE2 (via PDZ-binding motif); the interaction may enhance ACE2 membrane residence.

It is found in the cytoplasm. It localises to the apical cell membrane. The protein localises to the cell projection. The protein resides in the filopodium. Its subcellular location is the ruffle. It is found in the microvillus. It localises to the endomembrane system. Its function is as follows. Scaffold protein that connects plasma membrane proteins with members of the ezrin/moesin/radixin family and thereby helps to link them to the actin cytoskeleton and to regulate their surface expression. Necessary for recycling of internalized ADRB2. Was first known to play a role in the regulation of the activity and subcellular location of SLC9A3. Necessary for cAMP-mediated phosphorylation and inhibition of SLC9A3. Involved in sperm capacitation. May participate in the regulation of the chloride and bicarbonate homeostasis in spermatozoa. May enhance Wnt signaling. May participate in HTR4 targeting to microvilli. Involved in the regulation of phosphate reabsorption in the renal proximal tubules. The polypeptide is Na(+)/H(+) exchange regulatory cofactor NHE-RF1 (Nherf1) (Rattus norvegicus (Rat)).